A 421-amino-acid polypeptide reads, in one-letter code: MKLLVVGSGGREHAIAKKLLASKGVDQVFVAPGNDGMTLDGLDLVNIVVSEHSRLIAFAKENEISWAFIGPDDALAAGIVDDFNSAGLRAFGPTKAAAELEWSKDFAKEIMVKYNVPTAAYGTFSDFEKAKAYIEEQGAPIVVKADGLALGKGVVVAETVEQAVEAAQEMLLDNKFGDSGARVVIEEFLDGEEFSLFAFVNGDKFYIMPTAQDHKRAFDGDKGPNTGGMGAYAPVPHLPQSVVDTAVETIVRPVLEGMVAEGRPYLGVLYVGLILTADGPKVIEFNSRFGDPETQIILPRLTSDFAQNIDDIMMGIEPYITWQNDGVTLGVVVASEGYPLDYEKGVPLPEKTDGDIITYYAGAKFAENSELLLSNGGRVYMLVTTEDSVKAGQDKIYTQLAQQDTTGLFYRNDIGNKAIKE.

The ATP-grasp domain maps to 108-314 (KEIMVKYNVP…FAQNIDDIMM (207 aa)). Position 134–195 (134–195 (IEEQGAPIVV…EEFLDGEEFS (62 aa))) interacts with ATP. Residues E284 and N286 each contribute to the Mg(2+) site.

It belongs to the GARS family. Mg(2+) is required as a cofactor. The cofactor is Mn(2+).

The enzyme catalyses 5-phospho-beta-D-ribosylamine + glycine + ATP = N(1)-(5-phospho-beta-D-ribosyl)glycinamide + ADP + phosphate + H(+). Its pathway is purine metabolism; IMP biosynthesis via de novo pathway; N(1)-(5-phospho-D-ribosyl)glycinamide from 5-phospho-alpha-D-ribose 1-diphosphate: step 2/2. This is Phosphoribosylamine--glycine ligase from Streptococcus pyogenes serotype M6 (strain ATCC BAA-946 / MGAS10394).